A 31-amino-acid polypeptide reads, in one-letter code: Cytochrome b6-f complex subunit 6 (31 aa).

A helical membrane pass occupies residues 4-24; sequence ITSYFGFLLAVLIITSSLFIG.

Belongs to the PetL family. In terms of assembly, the 4 large subunits of the cytochrome b6-f complex are cytochrome b6, subunit IV (17 kDa polypeptide, PetD), cytochrome f and the Rieske protein, while the 4 small subunits are PetG, PetL, PetM and PetN. The complex functions as a dimer.

It is found in the plastid. The protein localises to the chloroplast thylakoid membrane. In terms of biological role, component of the cytochrome b6-f complex, which mediates electron transfer between photosystem II (PSII) and photosystem I (PSI), cyclic electron flow around PSI, and state transitions. PetL is important for photoautotrophic growth as well as for electron transfer efficiency and stability of the cytochrome b6-f complex. The chain is Cytochrome b6-f complex subunit 6 from Phaseolus vulgaris (Kidney bean).